Consider the following 67-residue polypeptide: Small ribosomal subunit protein eS17 (67 aa).

Belongs to the eukaryotic ribosomal protein eS17 family.

In Haloquadratum walsbyi (strain DSM 16790 / HBSQ001), this protein is Small ribosomal subunit protein eS17.